Reading from the N-terminus, the 641-residue chain is Mediator of RNA polymerase II transcription subunit 17 (641 aa).

Residues 159–186 (RLQSFNAAADKLLKSAARLETEVASETR) are a coiled coil.

This sequence belongs to the Mediator complex subunit 17 family. In terms of assembly, component of the Mediator complex.

It is found in the nucleus. In terms of biological role, component of the Mediator complex, a coactivator involved in the regulated transcription of nearly all RNA polymerase II-dependent genes. Mediator functions as a bridge to convey information from gene-specific regulatory proteins to the basal RNA polymerase II transcription machinery. Mediator is recruited to promoters by direct interactions with regulatory proteins and serves as a scaffold for the assembly of a functional preinitiation complex with RNA polymerase II and the general transcription factors. This chain is Mediator of RNA polymerase II transcription subunit 17 (srb4), found in Aspergillus clavatus (strain ATCC 1007 / CBS 513.65 / DSM 816 / NCTC 3887 / NRRL 1 / QM 1276 / 107).